Consider the following 104-residue polypeptide: Pyrimidine/purine nucleoside phosphorylase (104 aa).

It belongs to the nucleoside phosphorylase PpnP family.

It catalyses the reaction a purine D-ribonucleoside + phosphate = a purine nucleobase + alpha-D-ribose 1-phosphate. The enzyme catalyses adenosine + phosphate = alpha-D-ribose 1-phosphate + adenine. It carries out the reaction cytidine + phosphate = cytosine + alpha-D-ribose 1-phosphate. The catalysed reaction is guanosine + phosphate = alpha-D-ribose 1-phosphate + guanine. It catalyses the reaction inosine + phosphate = alpha-D-ribose 1-phosphate + hypoxanthine. The enzyme catalyses thymidine + phosphate = 2-deoxy-alpha-D-ribose 1-phosphate + thymine. It carries out the reaction uridine + phosphate = alpha-D-ribose 1-phosphate + uracil. The catalysed reaction is xanthosine + phosphate = alpha-D-ribose 1-phosphate + xanthine. Functionally, catalyzes the phosphorolysis of diverse nucleosides, yielding D-ribose 1-phosphate and the respective free bases. Can use uridine, adenosine, guanosine, cytidine, thymidine, inosine and xanthosine as substrates. Also catalyzes the reverse reactions. This chain is Pyrimidine/purine nucleoside phosphorylase, found in Geobacter metallireducens (strain ATCC 53774 / DSM 7210 / GS-15).